The sequence spans 195 residues: FMN-dependent NADH:quinone oxidoreductase (195 aa).

FMN is bound by residues Ser-10, 16–18 (SQS), and 91–94 (MYNF).

It belongs to the azoreductase type 1 family. Homodimer. FMN is required as a cofactor.

It catalyses the reaction 2 a quinone + NADH + H(+) = 2 a 1,4-benzosemiquinone + NAD(+). It carries out the reaction N,N-dimethyl-1,4-phenylenediamine + anthranilate + 2 NAD(+) = 2-(4-dimethylaminophenyl)diazenylbenzoate + 2 NADH + 2 H(+). In terms of biological role, quinone reductase that provides resistance to thiol-specific stress caused by electrophilic quinones. Functionally, also exhibits azoreductase activity. Catalyzes the reductive cleavage of the azo bond in aromatic azo compounds to the corresponding amines. This chain is FMN-dependent NADH:quinone oxidoreductase, found in Aeromonas salmonicida (strain A449).